The sequence spans 504 residues: AMP phosphorylase 1 (504 aa).

AMP is bound by residues glycine 169, 195-200 (SRAITS), and threonine 204. Aspartate 257 acts as the Proton donor in catalysis. 2 residues coordinate AMP: serine 265 and lysine 289.

This sequence belongs to the thymidine/pyrimidine-nucleoside phosphorylase family. Type 2 subfamily.

It catalyses the reaction AMP + phosphate = alpha-D-ribose 1,5-bisphosphate + adenine. It carries out the reaction CMP + phosphate = cytosine + alpha-D-ribose 1,5-bisphosphate. The enzyme catalyses UMP + phosphate = alpha-D-ribose 1,5-bisphosphate + uracil. Catalyzes the conversion of AMP and phosphate to adenine and ribose 1,5-bisphosphate (R15P). Exhibits phosphorylase activity toward CMP and UMP in addition to AMP. Functions in an archaeal AMP degradation pathway, together with R15P isomerase and RubisCO. The protein is AMP phosphorylase 1 of Archaeoglobus fulgidus (strain ATCC 49558 / DSM 4304 / JCM 9628 / NBRC 100126 / VC-16).